Reading from the N-terminus, the 351-residue chain is AA9 family lytic polysaccharide monooxygenase A (351 aa).

H1 is a Cu(2+) binding site. The cysteines at positions 52 and 178 are disulfide-linked. The N-linked (GlcNAc...) asparagine glycan is linked to N53. Position 86 (H86) interacts with Cu(2+). N138 carries an N-linked (GlcNAc...) asparagine glycan. O2 is bound by residues H164 and Q173. Y175 contributes to the Cu(2+) binding site. The GPI-anchor amidated serine moiety is linked to residue S280. The propeptide at 281–351 is removed in mature form; the sequence is SAIGTSTASS…RSGTLGRLSF (71 aa).

Belongs to the polysaccharide monooxygenase AA9 family. Cu(2+) serves as cofactor.

Its subcellular location is the cell membrane. It carries out the reaction [(1-&gt;4)-beta-D-glucosyl]n+m + reduced acceptor + O2 = 4-dehydro-beta-D-glucosyl-[(1-&gt;4)-beta-D-glucosyl]n-1 + [(1-&gt;4)-beta-D-glucosyl]m + acceptor + H2O.. Lytic polysaccharide monooxygenase (LPMO) that depolymerizes crystalline and amorphous polysaccharides via the oxidation of scissile alpha- or beta-(1-4)-glycosidic bonds, yielding C1 or C4 oxidation products. Catalysis by LPMOs requires the reduction of the active-site copper from Cu(II) to Cu(I) by a reducing agent and H(2)O(2) or O(2) as a cosubstrate. Its function is as follows. Has broad specificity, cleaving at any position along the beta-glucan backbone of xyloglucan, regardless of substitutions. Shows minor activity on glucomannan. This chain is AA9 family lytic polysaccharide monooxygenase A, found in Gloeophyllum trabeum (Brown rot fungus).